The primary structure comprises 1128 residues: Zinc finger protein 654 (1128 aa).

The disordered stretch occupies residues 498-523 (GFDSLTDQSTGETDPDDVSGVQPKGH). 5 C2H2-type zinc fingers span residues 572 to 594 (FACV…LKNH), 746 to 771 (FKCP…MTVH), 787 to 809 (GKCK…LNRH), 815 to 839 (YFCL…TKSH), and 844 to 868 (AQCS…EAQH). Residues 891–951 (DSNPNQEKDS…GNERSDDTVS (61 aa)) are disordered. 2 stretches are compositionally biased toward polar residues: residues 903–915 (NEKQ…VSTS) and 937–951 (SLVQ…DTVS). Residues S1123 and S1127 each carry the phosphoserine modification.

Belongs to the krueppel C2H2-type zinc-finger protein family.

It is found in the nucleus. Its function is as follows. May be involved in transcriptional regulation. The sequence is that of Zinc finger protein 654 from Homo sapiens (Human).